The chain runs to 357 residues: Neutral protease 2 homolog UREG_02006 (357 aa).

The first 19 residues, 1-19 (MLFSSRFLALAALLGQALA), serve as a signal peptide directing secretion. The propeptide occupies 20–179 (LPIDDFSQSD…QSAVPTIEKR (160 aa)). 2 cysteine pairs are disulfide-bonded: C187–C259 and C266–C284. Residue H308 participates in Zn(2+) binding. E309 is a catalytic residue. Positions 312 and 323 each coordinate Zn(2+).

Belongs to the peptidase M35 family. It depends on Zn(2+) as a cofactor.

Its subcellular location is the secreted. The enzyme catalyses Preferential cleavage of bonds with hydrophobic residues in P1'. Also 3-Asn-|-Gln-4 and 8-Gly-|-Ser-9 bonds in insulin B chain.. Functionally, secreted metalloproteinase that allows assimilation of proteinaceous substrates. Shows high activities on basic nuclear substrates such as histone and protamine. The protein is Neutral protease 2 homolog UREG_02006 of Uncinocarpus reesii (strain UAMH 1704).